Consider the following 129-residue polypeptide: Aldose 1-epimerase (129 aa).

This sequence belongs to the aldose epimerase family.

It carries out the reaction alpha-D-glucose = beta-D-glucose. It functions in the pathway carbohydrate metabolism; hexose metabolism. Functionally, mutarotase converts alpha-aldose to the beta-anomer. It is active on D-glucose, L-arabinose, D-xylose, D-galactose, maltose and lactose. This chain is Aldose 1-epimerase (galM), found in Lactobacillus helveticus (Lactobacillus suntoryeus).